A 595-amino-acid polypeptide reads, in one-letter code: Probable serine/threonine-protein kinase fhkC (595 aa).

A disordered region spans residues 1 to 84 (MNSNKEETTA…MTEDNSKEED (84 aa)). Residues 18–31 (EEQQQQQQPQQQEQ) show a composition bias toward low complexity. Positions 32 to 49 (INTTTASTTSNGENTASD) are enriched in polar residues. Residues 50 to 70 (NNNNSNNNNNNNTNNTNTNNN) are compositionally biased toward low complexity. The FHA domain occupies 116 to 170 (IILGRSKGVCNYTFTSPTVSGKHCKIYRDPTVKSRNVAFVDDTSTNGTFINNEVI). A Protein kinase domain is found at 218–479 (YDLREVLGTG…IDQALNHPWF (262 aa)). ATP is bound by residues 224–232 (LGTGNFASV) and K247. D342 (proton acceptor) is an active-site residue. At T377 the chain carries Phosphothreonine; by autocatalysis. The tract at residues 494 to 595 (KLEFPPPSTN…DEHEQKKVKN (102 aa)) is disordered. The segment covering 508–520 (PTPNTTSSNSQLV) has biased composition (polar residues). Positions 530–567 (DNTTDNNNNNNNNNNNNNNNNNNNTTNNSNNIDNNNGN) are enriched in low complexity. The span at 585–595 (NDEHEQKKVKN) shows a compositional bias: basic and acidic residues.

The protein belongs to the protein kinase superfamily. CAMK Ser/Thr protein kinase family. CHK2 subfamily.

It catalyses the reaction L-seryl-[protein] + ATP = O-phospho-L-seryl-[protein] + ADP + H(+). The enzyme catalyses L-threonyl-[protein] + ATP = O-phospho-L-threonyl-[protein] + ADP + H(+). The polypeptide is Probable serine/threonine-protein kinase fhkC (fhkC) (Dictyostelium discoideum (Social amoeba)).